Consider the following 415-residue polypeptide: Tumor necrosis factor receptor superfamily member 3 (415 aa).

The first 30 residues, 1–30 (MRLPRASSPCGLAWGPLLLGLSGLLVASQP), serve as a signal peptide directing secretion. Over 31–223 (QLVPPYRIEN…NPPEPGAMLL (193 aa)) the chain is Extracellular. N-linked (GlcNAc...) asparagine glycosylation is present at asparagine 40. 4 TNFR-Cys repeats span residues 42-81 (TCWD…TVCK), 82-124 (TCPH…KAEC), 125-170 (RCQP…VNCV), and 171-213 (PCKP…TICK). 10 cysteine pairs are disulfide-bonded: cysteine 43–cysteine 58, cysteine 59–cysteine 72, cysteine 62–cysteine 80, cysteine 83–cysteine 98, cysteine 101–cysteine 116, cysteine 104–cysteine 124, cysteine 126–cysteine 132, cysteine 139–cysteine 150, cysteine 142–cysteine 169, and cysteine 172–cysteine 187. The N-linked (GlcNAc...) asparagine glycan is linked to asparagine 179. The helical transmembrane segment at 224–244 (LAILLSLVLFLLFTTVLACAW) threads the bilayer. The Cytoplasmic portion of the chain corresponds to 245 to 415 (MRHPSLCRKL…ETETLGCQDL (171 aa)). Positions 261–304 (HPEGEESPPCPAPRADPHFPDLAEPLLPMSGDLSPSPAGPPTAP) are disordered. Serine 315 carries the phosphoserine modification. The segment at 361–399 (LGGTRGPGDPPAPPEPPYPTPEEGAPGPSELSTPYQEDG) is disordered. Positions 368–380 (GDPPAPPEPPYPT) are enriched in pro residues.

In terms of assembly, self-associates; dimerization and trimerization are promoted by lymphotoxin (LTA(3)). Associates with TRAF3. Associates with TRAF4. Associates with TRAF5.

Its subcellular location is the membrane. Functionally, receptor for the heterotrimeric lymphotoxin containing LTA and LTB, and for TNFS14/LIGHT. Activates NF-kappa-B signaling upon stimulation with lymphotoxin. Promotes apoptosis via TRAF3 and TRAF5. May play a role in the development of lymphoid organs. In terms of biological role, (Microbial infection) Plays a role in host defense against Zika virus infection. This is Tumor necrosis factor receptor superfamily member 3 (Ltbr) from Mus musculus (Mouse).